An 888-amino-acid chain; its full sequence is MNFQEFKHKYGYDAATKMMQQYLDIKFAHLDCLLLFRMGDFYEMFYEDAVLASGVLGIALTKRGKNGDEEVPMCGVPYHALENYLTKLIEENYKVAICDQLETPEEAKNRGGYKAVVNRNVTRIITPGTVIEENLITTAEPNYLASLVVPKNKDTAALCYADLSTSTIFVVNVPELEILNELARLKPREILLSEHLRSSDLASNISKQLNFRITYQVDSFFAVNKCEKIILDFYKMKDIKGVGEISNSQICAIGSILEYLTLTQKENIPNLPKPKIIDFHSYMTIDFSTRRNLEIVTNSCGGNKGSLLSTLNHTVTKQGGRLLYNFLSSPLTDTHKINQRLNITEFFHSNLDITAKVRELLKKTSDIERCLTRITMNRGSGRDLLSIKYTLETANSIKEIFFDNYGFELPSFIEKIVKPLIRNDELYNLIEESICEDAPNNLNDGGVIKHSYHPKVLQLHDLINNGKLHIEKLKDQYKKETGIDSLKISHNNVIGLFIDITAKNANKINDPKFIHRQTTVNSVRYTTAELQKLESDLVNAKTLVVSLEKELYEDICKRVTKQSDYLRILASSLSGIDVFCNFAYIASENDYTRPEFTDDLSFDIVKGRHPVVEEALNKERKSFVHNDCHLSEAERIWLITGPNMAGKSTFMRQNAIIAIIAQIGSFVPAKSARIGMVDKIFSRIGAADDLIKGQSTFMAEMLETSAILAQSTKNSLIILDEVGRGTSTYDGVSIAWSVLEYIHDKLKCRCLFATHYHELTIMDNFLPAMQNYTIAIEESGKDILFLHNIIAGAADRSYGIHVAALAGLPASVINRAEQILLKFEKNAAGKGKNILSTESNNLSLFAIESPKLQNSKLEEKFKTIDPDKLSPKEALELLYQLKSNFIKQ.

An ATP-binding site is contributed by G641–S648.

It belongs to the DNA mismatch repair MutS family.

This protein is involved in the repair of mismatches in DNA. It is possible that it carries out the mismatch recognition step. This protein has a weak ATPase activity. In Rickettsia bellii (strain OSU 85-389), this protein is DNA mismatch repair protein MutS.